The chain runs to 315 residues: tRNA-dihydrouridine(16) synthase (315 aa).

Residues 7-9 and glutamine 68 each bind FMN; that span reads PME. The Proton donor role is filled by cysteine 98. FMN contacts are provided by residues lysine 139, 200–202, and 224–225; these read NGE and GR.

It belongs to the Dus family. DusC subfamily. FMN is required as a cofactor.

It carries out the reaction 5,6-dihydrouridine(16) in tRNA + NADP(+) = uridine(16) in tRNA + NADPH + H(+). It catalyses the reaction 5,6-dihydrouridine(16) in tRNA + NAD(+) = uridine(16) in tRNA + NADH + H(+). Its function is as follows. Catalyzes the synthesis of 5,6-dihydrouridine (D), a modified base found in the D-loop of most tRNAs, via the reduction of the C5-C6 double bond in target uridines. Specifically modifies U16 in tRNAs. The polypeptide is tRNA-dihydrouridine(16) synthase (Shigella flexneri).